The sequence spans 310 residues: ADP-L-glycero-D-manno-heptose-6-epimerase (310 aa).

NADP(+)-binding positions include 10–11 (FI), 31–32 (DN), K38, K53, 75–79 (EGACS), and N92. The active-site Proton acceptor is Y140. K144 lines the NADP(+) pocket. N169 is a substrate binding site. Residues V170 and K178 each contribute to the NADP(+) site. K178 (proton acceptor) is an active-site residue. Residues S180, H187, 201–204 (FEGS), and R209 contribute to the substrate site. The residue at position 267 (K267) is an N6-acetyllysine. Y272 lines the substrate pocket.

It belongs to the NAD(P)-dependent epimerase/dehydratase family. HldD subfamily. In terms of assembly, homopentamer. NADP(+) is required as a cofactor. It depends on NAD(+) as a cofactor.

The catalysed reaction is ADP-D-glycero-beta-D-manno-heptose = ADP-L-glycero-beta-D-manno-heptose. The protein operates within nucleotide-sugar biosynthesis; ADP-L-glycero-beta-D-manno-heptose biosynthesis; ADP-L-glycero-beta-D-manno-heptose from D-glycero-beta-D-manno-heptose 7-phosphate: step 4/4. Its pathway is bacterial outer membrane biogenesis; LPS core biosynthesis. Completely inhibited by ADP and ADP-glucose, and partially inhibited by ATP and NADH. Catalyzes the interconversion between ADP-D-glycero-beta-D-manno-heptose and ADP-L-glycero-beta-D-manno-heptose via an epimerization at carbon 6 of the heptose. This is ADP-L-glycero-D-manno-heptose-6-epimerase (hldD) from Escherichia coli (strain K12).